Consider the following 363-residue polypeptide: Probable protein phosphatase 2C member 13, mitochondrial (363 aa).

Residues 1–59 constitute a mitochondrion transit peptide; it reads MVCFASLRRALPLLLRATTTTTPRFLLPRALSGGVGGGAAVDARALLRGHSGWRGLRVA. Positions 111-357 constitute a PPM-type phosphatase domain; the sequence is KCGYSSFRGK…DNITCIVVQF (247 aa). Residues D147, G148, D309, and D348 each coordinate Mn(2+).

This sequence belongs to the PP2C family. The cofactor is Mg(2+). It depends on Mn(2+) as a cofactor. Highly expressed in mature pollen grains.

It is found in the mitochondrion. The catalysed reaction is O-phospho-L-seryl-[protein] + H2O = L-seryl-[protein] + phosphate. It catalyses the reaction O-phospho-L-threonyl-[protein] + H2O = L-threonyl-[protein] + phosphate. In terms of biological role, probable protein phosphatase that may play a role as a mitochondrial signal transduction mediator in pollen germination. May function in retrograde signaling from the mitochondria to the nucleus. May be a downstream factor of cytoplasmic male sterility (CMS). CMS is caused by genetic incompatibility between nuclei and mitochondria within male reproductive organs. The chain is Probable protein phosphatase 2C member 13, mitochondrial from Oryza sativa subsp. japonica (Rice).